The following is a 326-amino-acid chain: tRNA uridine(34) hydroxylase (326 aa).

Residues Ser-123–Ser-217 form the Rhodanese domain. The active-site Cysteine persulfide intermediate is Cys-177. The segment at Lys-293–Gly-326 is disordered.

The protein belongs to the TrhO family.

It carries out the reaction uridine(34) in tRNA + AH2 + O2 = 5-hydroxyuridine(34) in tRNA + A + H2O. In terms of biological role, catalyzes oxygen-dependent 5-hydroxyuridine (ho5U) modification at position 34 in tRNAs. The chain is tRNA uridine(34) hydroxylase from Shewanella loihica (strain ATCC BAA-1088 / PV-4).